A 441-amino-acid chain; its full sequence is ATP-dependent protease ATPase subunit HslU (441 aa).

ATP contacts are provided by residues isoleucine 18, 60–65 (GVGKTE), aspartate 254, glutamate 319, and arginine 391.

Belongs to the ClpX chaperone family. HslU subfamily. In terms of assembly, a double ring-shaped homohexamer of HslV is capped on each side by a ring-shaped HslU homohexamer. The assembly of the HslU/HslV complex is dependent on binding of ATP.

The protein resides in the cytoplasm. Its function is as follows. ATPase subunit of a proteasome-like degradation complex; this subunit has chaperone activity. The binding of ATP and its subsequent hydrolysis by HslU are essential for unfolding of protein substrates subsequently hydrolyzed by HslV. HslU recognizes the N-terminal part of its protein substrates and unfolds these before they are guided to HslV for hydrolysis. This chain is ATP-dependent protease ATPase subunit HslU, found in Shewanella denitrificans (strain OS217 / ATCC BAA-1090 / DSM 15013).